Here is a 754-residue protein sequence, read N- to C-terminus: Phosphoribosylformylglycinamidine synthase subunit PurL (754 aa).

The active site involves His52. Residues Tyr55 and Lys95 each coordinate ATP. Glu97 lines the Mg(2+) pocket. Residues 98 to 101 (SHNH) and Arg120 contribute to the substrate site. His99 serves as the catalytic Proton acceptor. Residue Asp121 coordinates Mg(2+). Gln244 contributes to the substrate binding site. Residue Asp272 participates in Mg(2+) binding. A substrate-binding site is contributed by 316–318 (ESQ). The ATP site is built by Asn504 and Gly541. Asn542 is a binding site for Mg(2+). Ser544 serves as a coordination point for substrate.

It belongs to the FGAMS family. As to quaternary structure, monomer. Part of the FGAM synthase complex composed of 1 PurL, 1 PurQ and 2 PurS subunits.

The protein resides in the cytoplasm. The catalysed reaction is N(2)-formyl-N(1)-(5-phospho-beta-D-ribosyl)glycinamide + L-glutamine + ATP + H2O = 2-formamido-N(1)-(5-O-phospho-beta-D-ribosyl)acetamidine + L-glutamate + ADP + phosphate + H(+). The protein operates within purine metabolism; IMP biosynthesis via de novo pathway; 5-amino-1-(5-phospho-D-ribosyl)imidazole from N(2)-formyl-N(1)-(5-phospho-D-ribosyl)glycinamide: step 1/2. Functionally, part of the phosphoribosylformylglycinamidine synthase complex involved in the purines biosynthetic pathway. Catalyzes the ATP-dependent conversion of formylglycinamide ribonucleotide (FGAR) and glutamine to yield formylglycinamidine ribonucleotide (FGAM) and glutamate. The FGAM synthase complex is composed of three subunits. PurQ produces an ammonia molecule by converting glutamine to glutamate. PurL transfers the ammonia molecule to FGAR to form FGAM in an ATP-dependent manner. PurS interacts with PurQ and PurL and is thought to assist in the transfer of the ammonia molecule from PurQ to PurL. This Salinibacter ruber (strain DSM 13855 / M31) protein is Phosphoribosylformylglycinamidine synthase subunit PurL.